The chain runs to 445 residues: GTPase Der (445 aa).

EngA-type G domains are found at residues 3 to 166 and 180 to 353; these read PVIA…AERV and IRIG…ESCY. Residues 9 to 16, 56 to 60, 118 to 121, 186 to 193, 233 to 237, and 298 to 301 each bind GTP; these read GRPNVGKS, DTGGI, NKTD, DTAGI, and NKWD. Positions 354–438 constitute a KH-like domain; sequence AKWTTNRLTR…PIIFEFKSAE (85 aa).

This sequence belongs to the TRAFAC class TrmE-Era-EngA-EngB-Septin-like GTPase superfamily. EngA (Der) GTPase family. Associates with the 50S ribosomal subunit.

Its function is as follows. GTPase that plays an essential role in the late steps of ribosome biogenesis. This chain is GTPase Der, found in Marinomonas sp. (strain MWYL1).